The sequence spans 269 residues: 3-methyl-2-oxobutanoate hydroxymethyltransferase (269 aa).

Positions 46 and 85 each coordinate Mg(2+). 3-methyl-2-oxobutanoate-binding positions include 46 to 47, Asp-85, and Lys-114; that span reads DS. Glu-116 is a binding site for Mg(2+). Glu-183 acts as the Proton acceptor in catalysis.

The protein belongs to the PanB family. As to quaternary structure, homodecamer; pentamer of dimers. Mg(2+) is required as a cofactor.

It is found in the cytoplasm. It carries out the reaction 3-methyl-2-oxobutanoate + (6R)-5,10-methylene-5,6,7,8-tetrahydrofolate + H2O = 2-dehydropantoate + (6S)-5,6,7,8-tetrahydrofolate. The protein operates within cofactor biosynthesis; (R)-pantothenate biosynthesis; (R)-pantoate from 3-methyl-2-oxobutanoate: step 1/2. In terms of biological role, catalyzes the reversible reaction in which hydroxymethyl group from 5,10-methylenetetrahydrofolate is transferred onto alpha-ketoisovalerate to form ketopantoate. The protein is 3-methyl-2-oxobutanoate hydroxymethyltransferase of Methylococcus capsulatus (strain ATCC 33009 / NCIMB 11132 / Bath).